The following is a 266-amino-acid chain: Phosphatidate cytidylyltransferase (266 aa).

Helical transmembrane passes span 16–36 (VVLI…LFWA), 52–72 (LFQV…WVAA), 78–98 (PVEC…YQKA), 101–121 (SEAI…FGVY), 125–145 (GAVA…GAFF), 164–184 (LEGA…VGMG), 186–206 (LSGG…MAVF), and 237–257 (LDSM…LEIW).

This sequence belongs to the CDS family.

It localises to the cell inner membrane. The enzyme catalyses a 1,2-diacyl-sn-glycero-3-phosphate + CTP + H(+) = a CDP-1,2-diacyl-sn-glycerol + diphosphate. It participates in phospholipid metabolism; CDP-diacylglycerol biosynthesis; CDP-diacylglycerol from sn-glycerol 3-phosphate: step 3/3. The polypeptide is Phosphatidate cytidylyltransferase (cdsA) (Helicobacter pylori (strain J99 / ATCC 700824) (Campylobacter pylori J99)).